Consider the following 505-residue polypeptide: 4-alpha-glucanotransferase (505 aa).

It belongs to the disproportionating enzyme family.

The protein resides in the cytoplasm. It carries out the reaction Transfers a segment of a (1-&gt;4)-alpha-D-glucan to a new position in an acceptor, which may be glucose or a (1-&gt;4)-alpha-D-glucan.. This is 4-alpha-glucanotransferase (malQ) from Streptococcus pneumoniae serotype 4 (strain ATCC BAA-334 / TIGR4).